Reading from the N-terminus, the 671-residue chain is cGMP-dependent protein kinase 1 (671 aa).

Ser-2 bears the N-acetylserine mark. The stretch at Ser-2–Thr-59 forms a coiled coil. Residues Ser-2 to Asp-102 form a required for dimerization region. The leucine-zipper stretch occupies residues Ala-9–Gln-44. The segment at Pro-50–His-75 is autoinhibitory domain. The residue at position 59 (Thr-59) is a Phosphothreonine; by autocatalysis. Positions Phe-103 to Pro-220 are cGMP-binding, high affinity. 3',5'-cyclic GMP-binding positions include Gly-167–Ala-170, Arg-177–Thr-178, Arg-282, Gly-291–Ala-294, Arg-301–Thr-302, and Tyr-336. The interval Thr-221–Ala-341 is cGMP-binding, low affinity. Residues Phe-360–Phe-619 form the Protein kinase domain. ATP contacts are provided by residues Leu-366–Val-374 and Lys-390. The active-site Proton acceptor is Asp-484. Phosphothreonine is present on Thr-515. An AGC-kinase C-terminal domain is found at Glu-620 to Phe-671. A disordered region spans residues Pro-635–Phe-671. A compositionally biased stretch (acidic residues) spans Phe-652–Pro-661.

It belongs to the protein kinase superfamily. AGC Ser/Thr protein kinase family. cGMP subfamily. In terms of assembly, isoform alpha: parallel homodimer or heterodimer and also heterotetramer. Interacts directly with PPP1R12A. Non-covalent dimer of dimer of PRKG1-PRKG1 and PPP1R12A-PPP1R12A. This interaction targets PRKG1 to stress fibers to mediate smooth muscle cell relaxation and vasodilation in responses to rises in cGMP. Isoform beta: antiparallel homodimer. Part of cGMP kinase signaling complex at least composed of ACTA2/alpha-actin, CNN1/calponin H1, PLN/phospholamban, PRKG1 and ITPR1. Interacts with IRAG1. Forms a stable complex with ITPR1, IRAG1, and isoform beta of PRKG1. Interacts with TRPC7 (via ankyrin repeat domain). Isoform alpha interacts with RGS2. Interacts with GTF2I. Autophosphorylation increases kinase activity. In terms of processing, 65 kDa monomer is produced by proteolytic cleavage. Detected in cerebellum, hippocampus, dorsomedial hypothalamus, medulla, subcommissural organ, cerebral cortex, amygdala, habenulae, various hypothalamic regions, olfactory bulb, pituitary gland, and retina. Isoform alpha is prominent in the cerebellum and medulla, whereas isoform Beta is predominant in the cortex, hippocampus, hypothalamus, and olfactory bulb.

It localises to the cytoplasm. It carries out the reaction L-seryl-[protein] + ATP = O-phospho-L-seryl-[protein] + ADP + H(+). It catalyses the reaction L-threonyl-[protein] + ATP = O-phospho-L-threonyl-[protein] + ADP + H(+). In the absence of cGMP, PRKG1 activity is suppressed by autoinhibitory contacts. Serine/threonine protein kinase that acts as a key mediator of the nitric oxide (NO)/cGMP signaling pathway. GMP binding activates PRKG1, which phosphorylates serines and threonines on many cellular proteins. Numerous protein targets for PRKG1 phosphorylation are implicated in modulating cellular calcium, but the contribution of each of these targets may vary substantially among cell types. Proteins that are phosphorylated by PRKG1 regulate platelet activation and adhesion, smooth muscle contraction, cardiac function, gene expression, feedback of the NO-signaling pathway, and other processes involved in several aspects of the CNS like axon guidance, hippocampal and cerebellar learning, circadian rhythm and nociception. Smooth muscle relaxation is mediated through lowering of intracellular free calcium, by desensitization of contractile proteins to calcium, and by decrease in the contractile state of smooth muscle or in platelet activation. Regulates intracellular calcium levels via several pathways: phosphorylates IRAG1 and inhibits IP3-induced Ca(2+) release from intracellular stores, phosphorylation of KCNMA1 (BKCa) channels decreases intracellular Ca(2+) levels, which leads to increased opening of this channel. PRKG1 phosphorylates the canonical transient receptor potential channel (TRPC) family which inactivates the associated inward calcium current. Another mode of action of NO/cGMP/PKGI signaling involves PKGI-mediated inactivation of the Ras homolog gene family member A (RhoA). Phosphorylation of RHOA by PRKG1 blocks the action of this protein in myriad processes: regulation of RHOA translocation; decreasing contraction; controlling vesicle trafficking, reduction of myosin light chain phosphorylation resulting in vasorelaxation. Activation of PRKG1 by NO signaling also alters gene expression in a number of tissues. In smooth muscle cells, increased cGMP and PRKG1 activity influence expression of smooth muscle-specific contractile proteins, levels of proteins in the NO/cGMP signaling pathway, down-regulation of the matrix proteins osteopontin and thrombospondin-1 to limit smooth muscle cell migration and phenotype. Regulates vasodilator-stimulated phosphoprotein (VASP) functions in platelets and smooth muscle. This is cGMP-dependent protein kinase 1 (Prkg1) from Mus musculus (Mouse).